A 60-amino-acid chain; its full sequence is Large ribosomal subunit protein bL32 (60 aa).

Basic residues predominate over residues 1 to 22 (MAVPKKKTSKSRRDMRRSHHAL). The interval 1–27 (MAVPKKKTSKSRRDMRRSHHALKGSAY) is disordered.

The protein belongs to the bacterial ribosomal protein bL32 family.

This is Large ribosomal subunit protein bL32 from Rhodospirillum centenum (strain ATCC 51521 / SW).